Reading from the N-terminus, the 964-residue chain is Glycine dehydrogenase (decarboxylating) (964 aa).

Positions 1-11 (MNSTLQNQTKT) are enriched in polar residues. The interval 1-21 (MNSTLQNQTKTNLEKVGTDPL) is disordered. Lysine 713 is subject to N6-(pyridoxal phosphate)lysine.

This sequence belongs to the GcvP family. The glycine cleavage system is composed of four proteins: P, T, L and H. The cofactor is pyridoxal 5'-phosphate.

The catalysed reaction is N(6)-[(R)-lipoyl]-L-lysyl-[glycine-cleavage complex H protein] + glycine + H(+) = N(6)-[(R)-S(8)-aminomethyldihydrolipoyl]-L-lysyl-[glycine-cleavage complex H protein] + CO2. The glycine cleavage system catalyzes the degradation of glycine. The P protein binds the alpha-amino group of glycine through its pyridoxal phosphate cofactor; CO(2) is released and the remaining methylamine moiety is then transferred to the lipoamide cofactor of the H protein. This is Glycine dehydrogenase (decarboxylating) from Leptospira interrogans serogroup Icterohaemorrhagiae serovar Lai (strain 56601).